We begin with the raw amino-acid sequence, 419 residues long: UDP-N-acetylglucosamine 1-carboxyvinyltransferase (419 aa).

22-23 (KN) is a phosphoenolpyruvate binding site. Residue R93 coordinates UDP-N-acetyl-alpha-D-glucosamine. Residue C117 is the Proton donor of the active site. Residue C117 is modified to 2-(S-cysteinyl)pyruvic acid O-phosphothioketal. The UDP-N-acetyl-alpha-D-glucosamine site is built by D307 and I329.

It belongs to the EPSP synthase family. MurA subfamily.

It localises to the cytoplasm. The catalysed reaction is phosphoenolpyruvate + UDP-N-acetyl-alpha-D-glucosamine = UDP-N-acetyl-3-O-(1-carboxyvinyl)-alpha-D-glucosamine + phosphate. It functions in the pathway cell wall biogenesis; peptidoglycan biosynthesis. Functionally, cell wall formation. Adds enolpyruvyl to UDP-N-acetylglucosamine. This chain is UDP-N-acetylglucosamine 1-carboxyvinyltransferase, found in Shewanella putrefaciens (strain CN-32 / ATCC BAA-453).